The sequence spans 334 residues: Leukocyte cell-derived chemotaxin 1 (334 aa).

A helical membrane pass occupies residues 45-65 (VVLISGAVLLLFGAIGAFYFW). The 98-residue stretch at 104-201 (GSGAEEAIAV…LCGDLPIFWL (98 aa)) folds into the BRICHOS domain. Cysteines 131 and 193 form a disulfide. Positions 211 to 214 (RERR) are excised as a propeptide. Positions 218 to 268 (RKIVPTTTKRPHSGPRSNPGAGRLNNETRPSVQEDSQAFNPDNPYHQQEGE) are disordered. The span at 242–257 (NNETRPSVQEDSQAFN) shows a compositional bias: polar residues. N243 carries N-linked (GlcNAc...) asparagine glycosylation. 4 cysteine pairs are disulfide-bonded: C282/C286, C283/C323, C293/C317, and C297/C313.

The protein belongs to the chondromodulin-1 family. Post-translationally, after cleavage, the post-translationally modified ChM-I is secreted as a glycoprotein. In terms of tissue distribution, detected in cartilage and cardiac valves (at protein level). Detected in the laminae fibrosa, spongiosa and ventricularis layers of normal cardiac valves (at protein level). Expression is decreased cardiac valves of patients with valvular heart disease (at protein level). Weakly expressed in chondrosarcoma.

The protein resides in the secreted. The protein localises to the extracellular space. It localises to the extracellular matrix. It is found in the endomembrane system. Functionally, bifunctional growth regulator that stimulates the growth of cultured chondrocytes in the presence of basic fibroblast growth factor (FGF) but inhibits the growth of cultured vascular endothelial cells. May contribute to the rapid growth of cartilage and vascular invasion prior to the replacement of cartilage by bone during endochondral bone development. Inhibits in vitro tube formation and mobilization of endothelial cells. Plays a role as antiangiogenic factor in cardiac valves to suppress neovascularization. This chain is Leukocyte cell-derived chemotaxin 1, found in Homo sapiens (Human).